A 721-amino-acid chain; its full sequence is Angiomotin-like 2a (721 aa).

The disordered stretch occupies residues 35-84 (QQALRGGSSGGGAGSPRSSLESLTQEESLSPQLSARQEPQGQEHQGDFQH). The segment covering 49-68 (SPRSSLESLTQEESLSPQLS) has biased composition (low complexity). Residue tyrosine 103 is modified to Phosphotyrosine; by FGFR1. Positions 169–214 (DNIPMSSSHSYPQLSNNHSDTVVNEQSVHQPDQRGPPPEYPFMVRS) are disordered. Polar residues predominate over residues 172–198 (PMSSSHSYPQLSNNHSDTVVNEQSVHQ). Positions 275-531 (ANNFQMEQLI…TRWEQKYLEE (257 aa)) form a coiled coil. Polar residues predominate over residues 554–567 (INHSPRNSPNSSFN). 2 disordered regions span residues 554-575 (INHS…SPNH) and 666-709 (DSST…TQIS). Residues 688 to 702 (SAPEPSTASSSESTS) show a composition bias toward low complexity. Positions 718-721 (EILI) match the PDZ-binding motif.

Belongs to the angiomotin family. As to quaternary structure, interacts with SRC. In terms of processing, phosphorylation at Tyr-103 is necessary for efficient binding to SRC and synergistically functioning with SRC to activate the downstream MAPK pathway. In terms of tissue distribution, expressed in endothelial cells.

It is found in the recycling endosome. The protein localises to the cytoplasm. Its subcellular location is the cell projection. It localises to the podosome. The protein resides in the cell junction. Its function is as follows. Required for proper architecture of actin filaments and for cell movements during embryogenesis. Plays a role in the radial actin fiber architecture in skin epithelial cells, thereby maintains cell geometry, size and cell interconnectivity within the skin. Plays an important role in coupling actin fibers to cell junctions in endothelial cells and is therefore required for correct endothelial cell morphology and maintenance of dorsal aorta lumen expansion during embryogenesis. May further play a role in the polarity, proliferation and migration of endothelial cells, and therefore participates in angiogenesis. Inhibits the Wnt/beta-catenin signaling pathway, probably by recruiting CTNNB1 to recycling endosomes and hence preventing its translocation to the nucleus. Regulates the translocation of phosphorylated SRC to peripheral cell-matrix adhesion sites. Selectively promotes FGF-induced MAPK activation through SRC. The sequence is that of Angiomotin-like 2a (amotl2a) from Danio rerio (Zebrafish).